Here is a 169-residue protein sequence, read N- to C-terminus: Cell division inhibitor SulA (169 aa).

Positions 106-112 (ALRTGNY) are ftsZ binding. A lon protease binding region spans residues 162–169 (KIHSNLYH).

This sequence belongs to the SulA family. As to quaternary structure, interacts with FtsZ. Is rapidly cleaved and degraded by the Lon protease once DNA damage is repaired.

Functionally, component of the SOS system and an inhibitor of cell division. Accumulation of SulA causes rapid cessation of cell division and the appearance of long, non-septate filaments. In the presence of GTP, binds a polymerization-competent form of FtsZ in a 1:1 ratio, thus inhibiting FtsZ polymerization and therefore preventing it from participating in the assembly of the Z ring. This mechanism prevents the premature segregation of damaged DNA to daughter cells during cell division. The chain is Cell division inhibitor SulA from Escherichia coli O45:K1 (strain S88 / ExPEC).